A 1051-amino-acid polypeptide reads, in one-letter code: MNKLLFLSKKSSTSNLYRFYSRAPINESSIKSSFDPKVVEEFKYKYWQDSGLFKPKSNNGGEKFSMVLPPPNVTGSLHIGHSLTTTIQDSLIRYNRMMGKEVLWVPGLDHSGIATQVAVEKELQVKQGKTRFDLGREKFLEQVFQWTDQYSSNINNQLKITGSSLDWSRSVFTLDEQRNDAVQTAFIRMFEMGLIYRSTRLVNWCPYLQSVISDIEVDHKVIEKPTMLKLKSRKKSVEVGAIHNIAYMMEDPMLAPLIVSTTRPETIFGDTGLAIHPLDERYKDYHGKFAIHPFNHERIPIVLDDILVNREMGTGVVKITPAHDFNDYQCGQRHSLPIVNILNSNGTLNENSTAEFEGVDRLDARSMVIEKLEQMGLYREKLAHPQTLSICSRSGDLLEPVLKPQWYVKCKDMADKSIEFVESGEIKIIPESFRADWSRWLTNIQDWCISRQLWWGNPIPAYRVIMIDKVTNEDLDIHLTETERLKQEKWVVGKNEKEARENVFKTYGIANAGEYRLEKDQDVLDTWFSSGLFPISSMGWPTATKNSDNDNDFSRFLPLDVMETGSDILFFWVARMVMMCSTLNNGEVPFKTILLHPMIRDSQGRKMSKSLGNVIDPLHVINGISLQDLKENLSKSNLSQQEKVTATKGLEKEFPQGIPQCGTDSLRFSLAQYPINGKDINLDISKIIGNRLFCNKLWNASKFVFNYLVNLNNLSINLYYNNNNNEKDQQQPFNYLESTTLIDKWILLKLSKLVEIVNESYKSNNLSIAAQSLYSFFQYDFCDIYIECIKADLSKPILSKQNEHSSLVLASVLDSYLRMLHPFMPFITEDLWQRLPKSKQQLEIANSIEIDDSLSIMISDYPNPSYKYHQLFKNQEIEIEKQVNLFLDTLKLIRSQKVSLGINEKTKLIIKLQIIGDDQILIKSSFNQLKDSFEKLLNSNLIIDENNNNDNNNNNDNNDLTNISINKFTISKELQISIEFDKEINNQLNQKLINPNQSNDKKILKLENFIKQLQDEIDNPDFKQRVPEKVQNIKIEKLNQYKIELKEIYKK.

The transit peptide at Met1 to Tyr20 directs the protein to the mitochondrion. A 'HIGH' region motif is present at residues Pro71–His81. Residues Lys606–Ser610 carry the 'KMSKS' region motif. Residue Lys609 coordinates ATP. Residues Lys972–Asn1019 are a coiled coil.

This sequence belongs to the class-I aminoacyl-tRNA synthetase family.

It localises to the mitochondrion. It catalyses the reaction tRNA(Val) + L-valine + ATP = L-valyl-tRNA(Val) + AMP + diphosphate. This chain is Probable valine--tRNA ligase, mitochondrial (valS2), found in Dictyostelium discoideum (Social amoeba).